Consider the following 160-residue polypeptide: Transcriptional repressor NrdR (160 aa).

Positions 1-11 (MRCPSCSSLDT) are enriched in polar residues. Residues 1–20 (MRCPSCSSLDTQVKDSRPTE) form a disordered region. A zinc finger spans residues 3–34 (CPSCSSLDTQVKDSRPTEDSSVIRRRRVCLAC). An ATP-cone domain is found at 49–139 (LTVIKRNGRR…VYRNFREAKD (91 aa)).

The protein belongs to the NrdR family. It depends on Zn(2+) as a cofactor.

Functionally, negatively regulates transcription of bacterial ribonucleotide reductase nrd genes and operons by binding to NrdR-boxes. This is Transcriptional repressor NrdR from Rhodopseudomonas palustris (strain BisA53).